We begin with the raw amino-acid sequence, 115 residues long: Ribonuclease P protein component (115 aa).

It belongs to the RnpA family. Consists of a catalytic RNA component (M1 or rnpB) and a protein subunit.

It carries out the reaction Endonucleolytic cleavage of RNA, removing 5'-extranucleotides from tRNA precursor.. In terms of biological role, RNaseP catalyzes the removal of the 5'-leader sequence from pre-tRNA to produce the mature 5'-terminus. It can also cleave other RNA substrates such as 4.5S RNA. The protein component plays an auxiliary but essential role in vivo by binding to the 5'-leader sequence and broadening the substrate specificity of the ribozyme. This Bacillus cereus (strain ATCC 10987 / NRS 248) protein is Ribonuclease P protein component.